A 333-amino-acid chain; its full sequence is Adenosine deaminase (333 aa).

2 residues coordinate Zn(2+): histidine 12 and histidine 14. Substrate is bound by residues histidine 14, aspartate 16, and glycine 170. Histidine 197 lines the Zn(2+) pocket. Residue glutamate 200 is the Proton donor of the active site. Aspartate 278 contributes to the Zn(2+) binding site. Aspartate 279 provides a ligand contact to substrate.

The protein belongs to the metallo-dependent hydrolases superfamily. Adenosine and AMP deaminases family. Adenosine deaminase subfamily. Zn(2+) serves as cofactor.

It catalyses the reaction adenosine + H2O + H(+) = inosine + NH4(+). It carries out the reaction 2'-deoxyadenosine + H2O + H(+) = 2'-deoxyinosine + NH4(+). Its function is as follows. Catalyzes the hydrolytic deamination of adenosine and 2-deoxyadenosine. This chain is Adenosine deaminase, found in Salmonella enteritidis PT4 (strain P125109).